Here is a 156-residue protein sequence, read N- to C-terminus: Small ribosomal subunit protein uS7 (156 aa).

This sequence belongs to the universal ribosomal protein uS7 family. In terms of assembly, part of the 30S ribosomal subunit. Contacts proteins S9 and S11.

In terms of biological role, one of the primary rRNA binding proteins, it binds directly to 16S rRNA where it nucleates assembly of the head domain of the 30S subunit. Is located at the subunit interface close to the decoding center, probably blocks exit of the E-site tRNA. The sequence is that of Small ribosomal subunit protein uS7 from Pectobacterium atrosepticum (strain SCRI 1043 / ATCC BAA-672) (Erwinia carotovora subsp. atroseptica).